The following is a 171-amino-acid chain: S-ribosylhomocysteine lyase (171 aa).

Positions 54, 58, and 128 each coordinate Fe cation.

The protein belongs to the LuxS family. As to quaternary structure, homodimer. Requires Fe cation as cofactor.

The enzyme catalyses S-(5-deoxy-D-ribos-5-yl)-L-homocysteine = (S)-4,5-dihydroxypentane-2,3-dione + L-homocysteine. In terms of biological role, involved in the synthesis of autoinducer 2 (AI-2) which is secreted by bacteria and is used to communicate both the cell density and the metabolic potential of the environment. The regulation of gene expression in response to changes in cell density is called quorum sensing. Catalyzes the transformation of S-ribosylhomocysteine (RHC) to homocysteine (HC) and 4,5-dihydroxy-2,3-pentadione (DPD). The sequence is that of S-ribosylhomocysteine lyase from Shigella boydii serotype 4 (strain Sb227).